Here is a 357-residue protein sequence, read N- to C-terminus: Probable dual-specificity RNA methyltransferase RlmN (357 aa).

The active-site Proton acceptor is the Glu92. Residues 98–336 (HKYGLSVCVT…CGVRLEHGTD (239 aa)) enclose the Radical SAM core domain. Cys105 and Cys341 are joined by a disulfide. Residues Cys112, Cys116, and Cys119 each contribute to the [4Fe-4S] cluster site. Residues 164–165 (GE), Ser196, 219–221 (SLH), and Asn297 each bind S-adenosyl-L-methionine. Cys341 functions as the S-methylcysteine intermediate in the catalytic mechanism.

Belongs to the radical SAM superfamily. RlmN family. The cofactor is [4Fe-4S] cluster.

It is found in the cytoplasm. It catalyses the reaction adenosine(2503) in 23S rRNA + 2 reduced [2Fe-2S]-[ferredoxin] + 2 S-adenosyl-L-methionine = 2-methyladenosine(2503) in 23S rRNA + 5'-deoxyadenosine + L-methionine + 2 oxidized [2Fe-2S]-[ferredoxin] + S-adenosyl-L-homocysteine. The catalysed reaction is adenosine(37) in tRNA + 2 reduced [2Fe-2S]-[ferredoxin] + 2 S-adenosyl-L-methionine = 2-methyladenosine(37) in tRNA + 5'-deoxyadenosine + L-methionine + 2 oxidized [2Fe-2S]-[ferredoxin] + S-adenosyl-L-homocysteine. Its function is as follows. Specifically methylates position 2 of adenine 2503 in 23S rRNA and position 2 of adenine 37 in tRNAs. In Exiguobacterium sibiricum (strain DSM 17290 / CCUG 55495 / CIP 109462 / JCM 13490 / 255-15), this protein is Probable dual-specificity RNA methyltransferase RlmN.